A 343-amino-acid chain; its full sequence is Protein rax1 (343 aa).

Over 1 to 235 (MASAPRVSEV…NLNPLTCTGR (235 aa)) the chain is Cytoplasmic. The 120-residue stretch at 109 to 228 (ELSNEQTINS…LNHKFKHNLN (120 aa)) folds into the RGS domain. A helical membrane pass occupies residues 236–256 (FIIGYVSTFAAYWLGFCGIFL). Residues 257 to 263 (DYSRRKR) lie on the Extracellular side of the membrane. A helical membrane pass occupies residues 264–284 (VWTLLPFAFGFYNLICTWSKH). Residues 285 to 317 (DPVLALLGYSEVKPFHYEKVLQPSIRLSLNRRA) lie on the Cytoplasmic side of the membrane. Residues 318-338 (IFVLSIIVLIVGANTAIFSCV) form a helical membrane-spanning segment. Residues 339-343 (PSIRL) lie on the Extracellular side of the membrane.

Its subcellular location is the cell membrane. It localises to the endoplasmic reticulum membrane. May be involved in cell polarization and division. This Schizosaccharomyces pombe (strain 972 / ATCC 24843) (Fission yeast) protein is Protein rax1 (rax1).